A 450-amino-acid polypeptide reads, in one-letter code: 23S rRNA (uracil(1939)-C(5))-methyltransferase RlmD (450 aa).

Positions 1 to 62 (MPVAGPLDIV…PSYEQAGVVN (62 aa)) constitute a TRAM domain. The [4Fe-4S] cluster site is built by Cys75, Cys81, Cys84, and Cys163. S-adenosyl-L-methionine is bound by residues Gln271, Phe300, Asn305, Glu321, Asn349, and Asp370. Cys406 functions as the Nucleophile in the catalytic mechanism.

The protein belongs to the class I-like SAM-binding methyltransferase superfamily. RNA M5U methyltransferase family. RlmD subfamily.

The enzyme catalyses uridine(1939) in 23S rRNA + S-adenosyl-L-methionine = 5-methyluridine(1939) in 23S rRNA + S-adenosyl-L-homocysteine + H(+). In terms of biological role, catalyzes the formation of 5-methyl-uridine at position 1939 (m5U1939) in 23S rRNA. The sequence is that of 23S rRNA (uracil(1939)-C(5))-methyltransferase RlmD from Ralstonia pickettii (strain 12J).